The primary structure comprises 240 residues: 3-dehydroquinate dehydratase (240 aa).

Residues serine 15, 42–44 (EWR), and arginine 73 each bind 3-dehydroquinate. Catalysis depends on histidine 132, which acts as the Proton donor/acceptor. Catalysis depends on lysine 160, which acts as the Schiff-base intermediate with substrate. Residues arginine 202, serine 221, and glutamine 225 each coordinate 3-dehydroquinate.

Belongs to the type-I 3-dehydroquinase family. As to quaternary structure, homodimer.

It carries out the reaction 3-dehydroquinate = 3-dehydroshikimate + H2O. It functions in the pathway metabolic intermediate biosynthesis; chorismate biosynthesis; chorismate from D-erythrose 4-phosphate and phosphoenolpyruvate: step 3/7. In terms of biological role, involved in the third step of the chorismate pathway, which leads to the biosynthesis of aromatic amino acids. Catalyzes the cis-dehydration of 3-dehydroquinate (DHQ) and introduces the first double bond of the aromatic ring to yield 3-dehydroshikimate. The polypeptide is 3-dehydroquinate dehydratase (Latilactobacillus sakei subsp. sakei (strain 23K) (Lactobacillus sakei subsp. sakei)).